The following is an 84-amino-acid chain: PAMP-induced secreted peptide 2 (84 aa).

Positions M1–S24 are cleaved as a signal peptide. The interval K50–H84 is disordered. The span at E58–R70 shows a compositional bias: basic and acidic residues. P77 and P79 each carry 4-hydroxyproline.

Post-translationally, contains 4-hydroxyproline; hydroxylated on Pro-77 and Pro-79.

It is found in the secreted. The protein localises to the extracellular space. Its subcellular location is the apoplast. In terms of biological role, endogenous secreted peptide that acts as elicitor of immune response and positive regulator of defense response. Amplifies the immune response triggered by flg22, the active epitope of bacterial flagellin. Acts as a negative regulator of root growth. The protein is PAMP-induced secreted peptide 2 of Arabidopsis thaliana (Mouse-ear cress).